The sequence spans 194 residues: Imidazoleglycerol-phosphate dehydratase (194 aa).

Belongs to the imidazoleglycerol-phosphate dehydratase family.

The protein resides in the cytoplasm. It carries out the reaction D-erythro-1-(imidazol-4-yl)glycerol 3-phosphate = 3-(imidazol-4-yl)-2-oxopropyl phosphate + H2O. Its pathway is amino-acid biosynthesis; L-histidine biosynthesis; L-histidine from 5-phospho-alpha-D-ribose 1-diphosphate: step 6/9. This is Imidazoleglycerol-phosphate dehydratase from Bacillus cereus (strain G9842).